Reading from the N-terminus, the 149-residue chain is Calmodulin (149 aa).

Residue A2 is modified to N-acetylalanine. EF-hand domains lie at 8 to 43, 44 to 79, 81 to 116, and 117 to 149; these read EQIA…LGQN, PTEA…KMKD, DSEE…LGEK, and LTDE…MLAK. Positions 21, 23, 25, 27, 32, 57, 59, 61, 63, 68, 94, 96, 98, and 105 each coordinate Ca(2+). K116 carries the post-translational modification N6,N6,N6-trimethyllysine. The Ca(2+) site is built by D130, D132, D134, Q136, and E141.

The protein belongs to the calmodulin family.

Functionally, calmodulin mediates the control of a large number of enzymes, ion channels and other proteins by Ca(2+). Among the enzymes to be stimulated by the calmodulin-Ca(2+) complex are a number of protein kinases and phosphatases. The sequence is that of Calmodulin (CALM1) from Solanum lycopersicum (Tomato).